Consider the following 380-residue polypeptide: Ribosomal RNA large subunit methyltransferase G (380 aa).

It belongs to the methyltransferase superfamily. RlmG family.

It is found in the cytoplasm. The catalysed reaction is guanosine(1835) in 23S rRNA + S-adenosyl-L-methionine = N(2)-methylguanosine(1835) in 23S rRNA + S-adenosyl-L-homocysteine + H(+). Functionally, specifically methylates the guanine in position 1835 (m2G1835) of 23S rRNA. This is Ribosomal RNA large subunit methyltransferase G from Streptomyces avermitilis (strain ATCC 31267 / DSM 46492 / JCM 5070 / NBRC 14893 / NCIMB 12804 / NRRL 8165 / MA-4680).